Consider the following 103-residue polypeptide: MSSPWSLFDDHLRLAVRLTPNGGRDALDGIEADGEGEAFLKARVTAVPEKGKANKALMLLIAKSLRIPKSSVSLVSGETARKKILRIDGDPEDLVKKLEIFLG.

This sequence belongs to the UPF0235 family.

This chain is UPF0235 protein RL4503, found in Rhizobium johnstonii (strain DSM 114642 / LMG 32736 / 3841) (Rhizobium leguminosarum bv. viciae).